A 411-amino-acid polypeptide reads, in one-letter code: Meiotically up-regulated gene 147 protein (411 aa).

3 disordered regions span residues 1–52, 102–137, and 156–191; these read MLAQ…FENK, EREESGHDEEEADKDASFTGYYNSRNNDEEGSELAD, and HQHEDEFSSSNKDKGFTYEKPVTELPPKRPPYHYES. Over residues 33 to 43 the composition is skewed to polar residues; sequence TQNESNLQQSE. The span at 156–172 shows a compositional bias: basic and acidic residues; the sequence is HQHEDEFSSSNKDKGFT.

It is found in the cytoplasm. Its subcellular location is the nucleus. Has a role in meiosis. This Schizosaccharomyces pombe (strain 972 / ATCC 24843) (Fission yeast) protein is Meiotically up-regulated gene 147 protein (mug147).